Here is a 771-residue protein sequence, read N- to C-terminus: Topoisomerase 1-associated factor 2 (771 aa).

Disordered regions lie at residues 48 to 69, 271 to 330, and 346 to 367; these read NSINNCSDPSPTSPSSQNSIQS, EGVV…ISFD, and SDMHIQYSNPSSGAHSPRKSSL. A compositionally biased stretch (low complexity) spans 51-69; sequence NNCSDPSPTSPSSQNSIQS. Residues 275-294 show a composition bias toward polar residues; that stretch reads TQGSDNNKENIPSSTQQQKN. A compositionally biased stretch (basic and acidic residues) spans 295 to 307; that stretch reads DGAKRAESKDLDL. Positions 346–359 are enriched in polar residues; it reads SDMHIQYSNPSSGA. S397 carries the post-translational modification Phosphoserine. Position 405 is a phosphothreonine (T405). Residues 633-771 are disordered; the sequence is NSKDKVEATS…KYVESDEDDQ (139 aa). Positions 640-652 are enriched in polar residues; the sequence is ATSNSTAQEQEQV. The span at 690 to 709 shows a compositional bias: low complexity; sequence SHSSPSSSSSMSLESSLDSS.

This sequence to yeast YJL076w. As to quaternary structure, interacts with HPR1.

The protein resides in the nucleus. The chain is Topoisomerase 1-associated factor 2 (TOF2) from Saccharomyces cerevisiae (strain ATCC 204508 / S288c) (Baker's yeast).